A 178-amino-acid chain; its full sequence is Acireductone dioxygenase (178 aa).

Residues His-100, His-102, Glu-106, and His-145 each coordinate Fe(2+). Ni(2+)-binding residues include His-100, His-102, Glu-106, and His-145.

This sequence belongs to the acireductone dioxygenase (ARD) family. In terms of assembly, monomer. It depends on Fe(2+) as a cofactor. Ni(2+) is required as a cofactor.

It catalyses the reaction 1,2-dihydroxy-5-(methylsulfanyl)pent-1-en-3-one + O2 = 3-(methylsulfanyl)propanoate + CO + formate + 2 H(+). The enzyme catalyses 1,2-dihydroxy-5-(methylsulfanyl)pent-1-en-3-one + O2 = 4-methylsulfanyl-2-oxobutanoate + formate + 2 H(+). Its pathway is amino-acid biosynthesis; L-methionine biosynthesis via salvage pathway; L-methionine from S-methyl-5-thio-alpha-D-ribose 1-phosphate: step 5/6. In terms of biological role, catalyzes 2 different reactions between oxygen and the acireductone 1,2-dihydroxy-3-keto-5-methylthiopentene (DHK-MTPene) depending upon the metal bound in the active site. Fe-containing acireductone dioxygenase (Fe-ARD) produces formate and 2-keto-4-methylthiobutyrate (KMTB), the alpha-ketoacid precursor of methionine in the methionine recycle pathway. Ni-containing acireductone dioxygenase (Ni-ARD) produces methylthiopropionate, carbon monoxide and formate, and does not lie on the methionine recycle pathway. This chain is Acireductone dioxygenase, found in Bacillus velezensis (strain DSM 23117 / BGSC 10A6 / LMG 26770 / FZB42) (Bacillus amyloliquefaciens subsp. plantarum).